The following is a 113-amino-acid chain: uncharacterized protein (113 aa).

The next 3 helical transmembrane spans lie at 9-31 (IFPS…SVIY), 36-58 (VLTI…YKFQ), and 71-90 (IMAL…VVAV).

It localises to the cell membrane. This is an uncharacterized protein from Archaeoglobus fulgidus (strain ATCC 49558 / DSM 4304 / JCM 9628 / NBRC 100126 / VC-16).